The sequence spans 931 residues: Transportin (931 aa).

19 HEAT repeats span residues 10–37 (GLKQ…EELD), 42–79 (VPDY…QYFE), 88–121 (YIKR…KSCF), 127–164 (LLPA…LDSD), 171–201 (NQLI…YFII), 214–241 (FLKG…VTLV), 253–280 (KDVI…FWTA), 296–421 (PVLV…LSGI), 430–459 (VTLP…GAIA), 471–498 (SKVI…TLSR), 512–545 (LHPL…EEEA), 553–586 (LQMI…AKVV), 594–632 (ELIN…SSIG), 640–693 (SLFF…GIGT), 704–735 (LPHL…KFCL), 743–776 (PDYL…IRMP), 784–819 (VAIR…IVSP), 827–860 (DKFI…INNN), and 869–900 (VYIC…KTSM). One can recognise an Importin N-terminal domain in the interval 32-99 (IREELDKFHS…KREILPVLSD (68 aa)). Positions 317-401 (DQGDDSMTPD…DDDDDDDGFE (85 aa)) are disordered. The span at 358–381 (DNNNNSNNNNSSNNNSSNNNNNNN) shows a compositional bias: low complexity. The span at 382-401 (NEDDEEYNDDDDDDDDDGFE) shows a compositional bias: acidic residues.

This sequence belongs to the importin beta family. Importin beta-2 subfamily. Forms a complex with an importin alpha subunit.

It localises to the cytoplasm. Its subcellular location is the nucleus envelope. Functions in nuclear protein import via a substrate-importin alpha-beta transport complex that passes though the nuclear pore complexes (NPC). Mediates docking of the substrate-importin complex to distinct nucleoporins. The sequence is that of Transportin (tnpo) from Dictyostelium discoideum (Social amoeba).